The chain runs to 1372 residues: Paired amphipathic helix protein Sin3-like 1 (1372 aa).

Residues 1–50 (MKRIRDDVYASGSQFRRPLGSSRGQLCGQSPVHGSGDTEEEEEGGSRRVS) form a disordered region. 2 consecutive PAH domains span residues 51 to 121 (QKLT…LPKG) and 136 to 206 (KTVE…LPAS). A compositionally biased stretch (low complexity) spans 210–222 (HSAAQHSRSQAQQ). Disordered stretches follow at residues 210–244 (HSAA…ERRR) and 272–323 (REQR…SGSA). A compositionally biased stretch (basic and acidic residues) spans 272–315 (REQRKRLDKENRARRGRDLDDREAGQDNLHHFPEKRKSSRRAEA). Residues 331-400 (LKSMYKQAFV…DEFNQFFERC (70 aa)) form the PAH 3 domain. Disordered stretches follow at residues 764–783 (DVNH…GGDT), 791–817 (LKSA…NKDS), and 934–1056 (GLRS…AEGM). The segment covering 938-957 (DSSKGTRNSDDPEGPSRNEK) has biased composition (basic and acidic residues). Acidic residues-rich tracts occupy residues 990–1013 (AEAE…DSEN) and 1028–1042 (SQDE…EHDE). Phosphoserine is present on Ser1049.

Interacts (via PAH3) with ALY2. Interacts (via PAH2) with TBP1. Interacts with ALY3, GATA21, TRP2, TKI1, VAL1, SKP1B, FBX5 and PUB14.

It localises to the nucleus. In terms of biological role, acts as a transcriptional repressor. A histone deacetylase (HDAC) activity is required for transcription repression. May play a role in telomere stability. This chain is Paired amphipathic helix protein Sin3-like 1 (SNL1), found in Arabidopsis thaliana (Mouse-ear cress).